Consider the following 266-residue polypeptide: ATP synthase subunit a (266 aa).

Transmembrane regions (helical) follow at residues Ile28–Met48, Leu90–Phe110, Val125–Thr145, His158–Leu178, Leu187–Asn207, Ala216–Ile236, and Leu239–Leu259.

The protein belongs to the ATPase A chain family. As to quaternary structure, F-type ATPases have 2 components, CF(1) - the catalytic core - and CF(0) - the membrane proton channel. CF(1) has five subunits: alpha(3), beta(3), gamma(1), delta(1), epsilon(1). CF(0) has three main subunits: a(1), b(2) and c(9-12). The alpha and beta chains form an alternating ring which encloses part of the gamma chain. CF(1) is attached to CF(0) by a central stalk formed by the gamma and epsilon chains, while a peripheral stalk is formed by the delta and b chains.

It localises to the cell inner membrane. In terms of biological role, key component of the proton channel; it plays a direct role in the translocation of protons across the membrane. This is ATP synthase subunit a from Zymomonas mobilis subsp. mobilis (strain ATCC 31821 / ZM4 / CP4).